A 926-amino-acid chain; its full sequence is MADDDVLFEDVYELCEVIGKGPFSVVRRCINRETGQQFAVKIVDVAKFTSSPGLSTEDLKREASICHMLKHPHIVELLETYSSDGMLYMVFEFMDGADLCFEIVKRADAGFVYSEAVASHYMRQILEALRYCHDNNIIHRDVKPHCVLLASKENSAPVKLGGFGVAIQLGESGLVAGGRVGTPHFMAPEVVKREPYGKPVDVWGCGVILFILLSGCLPFYGTKERLFEGIIKGKYKMNPRQWSHISESAKDLVRRMLMLDPAERITVYEALNHPWLKERDRYAYKIHLPETVEQLRKFNARRKLKGAVLAAVSSHKFNSFYGDPPEELPDFSEDPTSSGLLAAERAVSQVLDSLEEIHALTDCSEKDLDFLHSVFQDQHLHTLLDLYDKINTKSSPQIRNPPSDAVQRAKEVLEEISCYPENNDAKELKRILTQPHFMALLQTHDVVAHEVYSDEALRVTPPPTSPYLNGDSPESANGDMDMENVTRVRLVQFQKNTDEPMGITLKMNELNHCIVARIMHGGMIHRQGTLHVGDEIREINGISVANQTVEQLQKMLREMRGSITFKIVPSYRTQSSSCERDSPSTSRQSPANGHSSTNNSVSDLPSTTQPKGRQIYVRAQFEYDPAKDDLIPCKEAGIRFRVGDIIQIISKDDHNWWQGKLENSKNGTAGLIPSPELQEWRVACIAMEKTKQEQQASCTWFGKKKKQYKDKYLAKHNAVFDQLDLVTYEEVVKLPAFKRKTLVLLGAHGVGRRHIKNTLITKHPDRFAYPIPHTTRPPKKDEENGKNYYFVSHDQMMQDISNNEYLEYGSHEDAMYGTKLETIRKIHEQGLIAILDVEPQALKVLRTAEFAPFVVFIAAPTITPGLNEDESLQRLQKESDVLQRTYAHYFDLTIINNEIDETIRHLEEAVELVCTAPQWVPVSWVY.

In terms of domain architecture, Protein kinase spans 12-276 (YELCEVIGKG…VYEALNHPWL (265 aa)). ATP-binding positions include 18–26 (IGKGPFSVV) and K41. Position 51 is a phosphoserine (S51). D141 is a catalytic residue. S151 and S155 each carry phosphoserine; by autocatalysis. Position 182 is a phosphothreonine (T182). Positions 305 to 315 (KGAVLAAVSSH) are calmodulin-binding. Phosphoserine is present on S313. 2 consecutive L27 domains span residues 343 to 398 (AERA…SPQI) and 402 to 455 (PSDA…YSDE). Residues 482 to 909 (MENVTRVRLV…DETIRHLEEA (428 aa)) are required for interaction with NRXN1 (via C-terminal tail). The region spanning 490 to 571 (LVQFQKNTDE…SITFKIVPSY (82 aa)) is the PDZ domain. A phosphoserine mark is found at S570 and Y571. The tract at residues 574-610 (QSSSCERDSPSTSRQSPANGHSSTNNSVSDLPSTTQP) is disordered. Residues 612 to 682 (GRQIYVRAQF…PSPELQEWRV (71 aa)) form the SH3 domain. The Guanylate kinase-like domain maps to 739-911 (RKTLVLLGAH…TIRHLEEAVE (173 aa)).

The protein in the N-terminal section; belongs to the protein kinase superfamily. CAMK Ser/Thr protein kinase family. CaMK subfamily. Belongs to the MAGUK family. In terms of assembly, CASK and LIN7 form a tripartite complex with CASKIN1. Component of the brain-specific heterotrimeric complex (LIN-10-LIN-2-LIN-7 complex) composed of at least APBA1, CASK, and LIN7, which associates with the motor protein KIF17 to transport vesicles along microtubules. Forms a heterotrimeric complex with DLG1 and LIN7B via their L27 domains. Identified in a complex with ACTN4, IQGAP1, MAGI2, NPHS1, SPTAN1 and SPTBN1. Part of a complex containing CASK, TBR1 and TSPYL2. Interacts with WHRN. Interacts (via the PDZ, SH3 and guanylate kinase-like domains) with NRXN1 (via C-terminus). Interacts with CASKIN1, APBA1, LIN7(A/B/C), and L27 domain of DLG1 and isoform 2 of DLG4. Interacts with FCHSD2. Interacts with KIRREL3. Interacts with TBR1. Interacts with TSPYL2. Unlike other protein kinases, does not require a divalent cation such as magnesium for catalytic activity. serves as cofactor.

Its subcellular location is the nucleus. It localises to the cytoplasm. It is found in the cell membrane. The enzyme catalyses L-seryl-[protein] + ATP = O-phospho-L-seryl-[protein] + ADP + H(+). It carries out the reaction L-threonyl-[protein] + ATP = O-phospho-L-threonyl-[protein] + ADP + H(+). With respect to regulation, differs from archetypal CaMK members in that the kinase domain exhibits a constitutively active conformation and the autoinhibitory region does not engage in direct contact with the ATP-binding cleft, although it still binds Ca(2+)/CAM. Its function is as follows. Multidomain scaffolding Mg(2+)-independent protein kinase that catalyzes the phosphotransfer from ATP to proteins such as NRXN1, and plays a role in synaptic transmembrane protein anchoring and ion channel trafficking. Contributes to neural development and regulation of gene expression via interaction with the transcription factor TBR1. Binds to cell-surface proteins, including amyloid precursor protein, neurexins, and syndecans. May mediate a link between the extracellular matrix and the actin cytoskeleton via its interaction with syndecan and with the actin/spectrin-binding protein 4.1. Component of the LIN-10-LIN-2-LIN-7 complex, which associates with the motor protein KIF17 to transport vesicles containing N-methyl-D-aspartate (NMDA) receptor subunit NR2B along microtubules. This chain is Peripheral plasma membrane protein CASK, found in Mus musculus (Mouse).